We begin with the raw amino-acid sequence, 168 residues long: RxLR effector protein CRE8 (168 aa).

A signal peptide spans 1-23; the sequence is MRLPSILVVAASTLFLHYGYTSA. Residues 54 to 69 carry the RxLR-dEER motif; that stretch reads RFLRDGKIAEGDNEER.

The protein belongs to the RxLR effector family.

It localises to the secreted. Its subcellular location is the host cell. In terms of biological role, effector that is involved in host plant infection. Contributes to virulence during the early infection stage, by inhibiting plant defense responses induced by both PAMP-triggered immunity (PTI) and effector-triggered immunity (ETI). The polypeptide is RxLR effector protein CRE8 (Phytophthora infestans (strain T30-4) (Potato late blight agent)).